A 92-amino-acid chain; its full sequence is Phosphoribosyl-ATP pyrophosphatase (92 aa).

Belongs to the PRA-PH family.

It is found in the cytoplasm. It carries out the reaction 1-(5-phospho-beta-D-ribosyl)-ATP + H2O = 1-(5-phospho-beta-D-ribosyl)-5'-AMP + diphosphate + H(+). Its pathway is amino-acid biosynthesis; L-histidine biosynthesis; L-histidine from 5-phospho-alpha-D-ribose 1-diphosphate: step 2/9. This is Phosphoribosyl-ATP pyrophosphatase from Leptospira biflexa serovar Patoc (strain Patoc 1 / ATCC 23582 / Paris).